The chain runs to 181 residues: NADH-quinone oxidoreductase subunit B (181 aa).

4 residues coordinate [4Fe-4S] cluster: cysteine 45, cysteine 46, cysteine 111, and cysteine 140.

Belongs to the complex I 20 kDa subunit family. NDH-1 is composed of 14 different subunits. Subunits NuoB, C, D, E, F, and G constitute the peripheral sector of the complex. Requires [4Fe-4S] cluster as cofactor.

The protein localises to the cell inner membrane. It catalyses the reaction a quinone + NADH + 5 H(+)(in) = a quinol + NAD(+) + 4 H(+)(out). Its function is as follows. NDH-1 shuttles electrons from NADH, via FMN and iron-sulfur (Fe-S) centers, to quinones in the respiratory chain. The immediate electron acceptor for the enzyme in this species is believed to be ubiquinone. Couples the redox reaction to proton translocation (for every two electrons transferred, four hydrogen ions are translocated across the cytoplasmic membrane), and thus conserves the redox energy in a proton gradient. This is NADH-quinone oxidoreductase subunit B (nuoB) from Thermus thermophilus (strain ATCC BAA-163 / DSM 7039 / HB27).